Consider the following 226-residue polypeptide: Fibronectin type III domain-containing protein 9 (226 aa).

One can recognise a Fibronectin type-III domain in the interval 1 to 101; that stretch reads MNIEVGNVSH…FHTLDKSPLA (101 aa). Residues 113–133 traverse the membrane as a helical segment; it reads LWVLMAILLACFTAVLAFICL.

It is found in the membrane. The chain is Fibronectin type III domain-containing protein 9 (Fndc9) from Mus musculus (Mouse).